The chain runs to 159 residues: NADH-quinone oxidoreductase subunit I (159 aa).

4Fe-4S ferredoxin-type domains are found at residues 51–80 (RRYE…IESD) and 90–119 (TRYD…EGPN). Residues Cys60, Cys63, Cys66, Cys70, Cys99, Cys102, Cys105, and Cys109 each contribute to the [4Fe-4S] cluster site.

It belongs to the complex I 23 kDa subunit family. As to quaternary structure, NDH-1 is composed of 14 different subunits. Subunits NuoA, H, J, K, L, M, N constitute the membrane sector of the complex. [4Fe-4S] cluster serves as cofactor.

It is found in the cell inner membrane. It carries out the reaction a quinone + NADH + 5 H(+)(in) = a quinol + NAD(+) + 4 H(+)(out). NDH-1 shuttles electrons from NADH, via FMN and iron-sulfur (Fe-S) centers, to quinones in the respiratory chain. The immediate electron acceptor for the enzyme in this species is believed to be ubiquinone. Couples the redox reaction to proton translocation (for every two electrons transferred, four hydrogen ions are translocated across the cytoplasmic membrane), and thus conserves the redox energy in a proton gradient. This is NADH-quinone oxidoreductase subunit I from Rickettsia typhi (strain ATCC VR-144 / Wilmington).